The following is a 346-amino-acid chain: Ornithine carbamoyltransferase, catabolic (346 aa).

Residues 58 to 61 (STRT), N85, R109, and 136 to 139 (HPTQ) contribute to the carbamoyl phosphate site. Residues N168, D239, and 243 to 244 (SL) each bind L-ornithine. Carbamoyl phosphate-binding positions include 280–281 (CL) and R332.

The protein belongs to the aspartate/ornithine carbamoyltransferase superfamily. OTCase family.

It is found in the cytoplasm. The enzyme catalyses carbamoyl phosphate + L-ornithine = L-citrulline + phosphate + H(+). It participates in amino-acid degradation; L-arginine degradation via ADI pathway; carbamoyl phosphate from L-arginine: step 2/2. Functionally, reversibly catalyzes the transfer of the carbamoyl group from carbamoyl phosphate (CP) to the N(epsilon) atom of ornithine (ORN) to produce L-citrulline. The chain is Ornithine carbamoyltransferase, catabolic from Mycoplasma pneumoniae (strain ATCC 29342 / M129 / Subtype 1) (Mycoplasmoides pneumoniae).